The following is a 541-amino-acid chain: Cytochrome P450 monooxygenase claU (541 aa).

The helical transmembrane segment at 12 to 32 (VIDTLVILFSTWAFLGLIRVI) threads the bilayer. Residue Cys480 coordinates heme.

It belongs to the cytochrome P450 family. Heme serves as cofactor.

Its subcellular location is the membrane. It participates in secondary metabolite biosynthesis; terpenoid biosynthesis. In terms of biological role, cytochrome P450 monooxygenase; part of the gene cluster that mediates the biosynthesis of clavilactone A, a meroterpenoid that features a unique benzo-fused ten-membered carbocyclic ring unit with an alpha,beta-epoxy-gamma-lactone moiety, forming an intriguing 10/5/3 tricyclic nested skeleton. Cytochrome P450 monooxygenases claO, claP, claQ, claU, and claW are close orthologs, suggesting that a redundant function or pseudogenes are present in the cla cluster. These monoxygenases are not involved in clavilactone A biosynthesis nor its modification. ClaR, ClaS and ClaT are sufficient to produce clavilactone A. The biosynthesis begins with the prenyltransferase claS that transfers geranyl pyrophosphate (GPP) to hydroquinone to produces geranylhydroquinone. The cytochrome P450 monooxygenase claR then catalyzes the diradical coupling reaction between the intramolecular hydroquinone and allyl moieties to form the benzo-fused ten-membered carbocyclic ring unit of wigantol. Finally the cytochrome P450 monooxygenase claT exquisitely and stereoselectively assembles the alpha,beta-epoxy-gamma-lactone moiety, producing clavilactone A via arnebinol A. The polypeptide is Cytochrome P450 monooxygenase claU (Ampulloclitocybe clavipes (Club foot)).